A 459-amino-acid polypeptide reads, in one-letter code: ATP-dependent protease ATPase subunit HslU (459 aa).

ATP-binding positions include Val18, 60–65 (GVGKTE), Asp272, Glu337, and Arg409.

It belongs to the ClpX chaperone family. HslU subfamily. In terms of assembly, a double ring-shaped homohexamer of HslV is capped on each side by a ring-shaped HslU homohexamer. The assembly of the HslU/HslV complex is dependent on binding of ATP.

The protein localises to the cytoplasm. ATPase subunit of a proteasome-like degradation complex; this subunit has chaperone activity. The binding of ATP and its subsequent hydrolysis by HslU are essential for unfolding of protein substrates subsequently hydrolyzed by HslV. HslU recognizes the N-terminal part of its protein substrates and unfolds these before they are guided to HslV for hydrolysis. The polypeptide is ATP-dependent protease ATPase subunit HslU (Thermoanaerobacter sp. (strain X514)).